Reading from the N-terminus, the 217-residue chain is uncharacterized protein (217 aa).

Disordered regions lie at residues 1 to 85 (MGVK…RGNT) and 167 to 189 (KLRSPPHKDQHNSATNKDQEPDE). Positions 38–48 (AKSDKDKRKGS) are enriched in basic and acidic residues. Residues 60-78 (NALPTKNLTTPPALNPLTT) are compositionally biased toward low complexity. Residues 172 to 189 (PHKDQHNSATNKDQEPDE) are compositionally biased toward basic and acidic residues.

This is an uncharacterized protein from Saccharomyces cerevisiae (strain ATCC 204508 / S288c) (Baker's yeast).